The primary structure comprises 382 residues: 6-hydroxynicotinate 3-monooxygenase (382 aa).

The first 25 residues, 1 to 25 (MRGRQKIAIVGAGLGGAAAATLLQQ), serve as a signal peptide directing secretion. Residues Gly-15, 34 to 35 (EQ), His-47, Arg-108, and Leu-130 contribute to the FAD site. Catalysis depends on His-47, which acts as the Proton acceptor. Catalysis depends on Tyr-215, which acts as the Proton acceptor. FAD-binding positions include Asp-294 and 307–308 (AC).

Belongs to the 6-hydroxynicotinate 3-monooxygenase family. Monomer. Requires FAD as cofactor.

It catalyses the reaction 6-hydroxynicotinate + NADH + O2 + 2 H(+) = 2,5-dihydroxypyridine + CO2 + NAD(+) + H2O. Its pathway is cofactor degradation; nicotinate degradation. Its function is as follows. Flavin-dependent monooxygenase (FMO) that catalyzes the decarboxylative hydroxylation of 6-hydroxynicotinic acid (6-HNA) to 2,5-dihydroxypyridine (2,5-DHP) with concomitant oxidation of NADH, a step in the aerobic nicotinate degradation pathway. In Pseudomonas putida (strain ATCC 47054 / DSM 6125 / CFBP 8728 / NCIMB 11950 / KT2440), this protein is 6-hydroxynicotinate 3-monooxygenase.